We begin with the raw amino-acid sequence, 159 residues long: uncharacterized protein (159 aa).

The segment at 1 to 139 is disordered; that stretch reads MSRRAPGSRL…RKSQERSMSY (139 aa). Residues 9–31 show a composition bias toward polar residues; the sequence is RLSSGGTNYSRSWNDWQPRTDSA. The segment covering 65 to 82 has biased composition (basic and acidic residues); it reads QRHDDTRVHADIQNDEKG. Over residues 105–119 the composition is skewed to polar residues; the sequence is RVNNVTSPEFTSVQH. Basic and acidic residues predominate over residues 125-134; sequence ATKDMRKSQE.

This is an uncharacterized protein from Homo sapiens (Human).